Reading from the N-terminus, the 472-residue chain is NADH-quinone oxidoreductase subunit N 2 (472 aa).

Helical transmembrane passes span 3–23, 34–54, 67–87, 106–126, 156–176, 198–218, 233–253, 263–283, 291–311, 317–337, 360–380, 398–418, and 441–461; these read WMSF…LLLS, HVAA…SVGA, LFSQ…VTLC, FVCT…VVFI, FLVG…LYGA, VVIG…VFPF, VSAY…VRVI, LVHV…LAAI, LLAY…LSMN, AAVF…LVLV, ILAL…PTVG, TLVL…LLVI, and LLSG…NQII.

The protein belongs to the complex I subunit 2 family. NDH-1 is composed of 14 different subunits. Subunits NuoA, H, J, K, L, M, N constitute the membrane sector of the complex.

Its subcellular location is the cell inner membrane. The catalysed reaction is a quinone + NADH + 5 H(+)(in) = a quinol + NAD(+) + 4 H(+)(out). NDH-1 shuttles electrons from NADH, via FMN and iron-sulfur (Fe-S) centers, to quinones in the respiratory chain. The immediate electron acceptor for the enzyme in this species is believed to be ubiquinone. Couples the redox reaction to proton translocation (for every two electrons transferred, four hydrogen ions are translocated across the cytoplasmic membrane), and thus conserves the redox energy in a proton gradient. In Syntrophobacter fumaroxidans (strain DSM 10017 / MPOB), this protein is NADH-quinone oxidoreductase subunit N 2.